The sequence spans 201 residues: Adenylyl-sulfate kinase (201 aa).

Residues 1-23 are disordered; the sequence is MALHDENVVWHSHPVTPQQREQH. 35–42 serves as a coordination point for ATP; it reads GLSGSGKS. Ser-109 functions as the Phosphoserine intermediate in the catalytic mechanism.

It belongs to the APS kinase family.

The catalysed reaction is adenosine 5'-phosphosulfate + ATP = 3'-phosphoadenylyl sulfate + ADP + H(+). It participates in sulfur metabolism; hydrogen sulfide biosynthesis; sulfite from sulfate: step 2/3. Functionally, catalyzes the synthesis of activated sulfate. The polypeptide is Adenylyl-sulfate kinase (Escherichia coli O127:H6 (strain E2348/69 / EPEC)).